Consider the following 205-residue polypeptide: Ras-related protein RABD1 (205 aa).

An N-acetylserine modification is found at serine 2. GTP contacts are provided by residues glycine 15–cysteine 23, tyrosine 33–threonine 40, aspartate 63–glutamine 67, asparagine 121–aspartate 124, and serine 151–lysine 153. An Effector region motif is present at residues tyrosine 37 to phenylalanine 45. 2 stretches are compositionally biased toward polar residues: residues glycine 174–glycine 186 and proline 194–glutamine 205. Positions glycine 174–glutamine 205 are disordered. 2 S-geranylgeranyl cysteine lipidation sites follow: cysteine 202 and cysteine 203.

This sequence belongs to the small GTPase superfamily. Rab family. In terms of assembly, does not interact with GC5. Interacts with XI-2/MYA2.

It is found in the golgi apparatus. The protein localises to the trans-Golgi network membrane. The protein resides in the golgi apparatus membrane. Functionally, protein transport. Regulator of membrane traffic from the Golgi apparatus towards the endoplasmic reticulum (ER). The polypeptide is Ras-related protein RABD1 (RABD1) (Arabidopsis thaliana (Mouse-ear cress)).